The chain runs to 312 residues: Ribosomal protein L11 methyltransferase (312 aa).

S-adenosyl-L-methionine is bound by residues Thr-162, Gly-183, Asp-205, and Asn-248.

Belongs to the methyltransferase superfamily. PrmA family.

It is found in the cytoplasm. It catalyses the reaction L-lysyl-[protein] + 3 S-adenosyl-L-methionine = N(6),N(6),N(6)-trimethyl-L-lysyl-[protein] + 3 S-adenosyl-L-homocysteine + 3 H(+). Functionally, methylates ribosomal protein L11. In Anoxybacillus flavithermus (strain DSM 21510 / WK1), this protein is Ribosomal protein L11 methyltransferase.